We begin with the raw amino-acid sequence, 207 residues long: Imidazole glycerol phosphate synthase subunit HisH (207 aa).

Residues 1–206 (MMIVIGYDAG…KEYVYENTAR (206 aa)) form the Glutamine amidotransferase type-1 domain. C79 acts as the Nucleophile in catalysis. Catalysis depends on residues H181 and E183.

In terms of assembly, heterodimer of HisH and HisF.

It is found in the cytoplasm. The enzyme catalyses 5-[(5-phospho-1-deoxy-D-ribulos-1-ylimino)methylamino]-1-(5-phospho-beta-D-ribosyl)imidazole-4-carboxamide + L-glutamine = D-erythro-1-(imidazol-4-yl)glycerol 3-phosphate + 5-amino-1-(5-phospho-beta-D-ribosyl)imidazole-4-carboxamide + L-glutamate + H(+). It carries out the reaction L-glutamine + H2O = L-glutamate + NH4(+). The protein operates within amino-acid biosynthesis; L-histidine biosynthesis; L-histidine from 5-phospho-alpha-D-ribose 1-diphosphate: step 5/9. IGPS catalyzes the conversion of PRFAR and glutamine to IGP, AICAR and glutamate. The HisH subunit catalyzes the hydrolysis of glutamine to glutamate and ammonia as part of the synthesis of IGP and AICAR. The resulting ammonia molecule is channeled to the active site of HisF. The chain is Imidazole glycerol phosphate synthase subunit HisH from Streptococcus gordonii (strain Challis / ATCC 35105 / BCRC 15272 / CH1 / DL1 / V288).